We begin with the raw amino-acid sequence, 44 residues long: SIFTKELWDKKLFNGSWQSAQDTYSVIEVATGXVLGEIGYATAQ.

The protein belongs to the aldehyde dehydrogenase family.

It carries out the reaction benzaldehyde + NAD(+) + H2O = benzoate + NADH + 2 H(+). The chain is Benzaldehyde dehydrogenase [NAD(+)] II from Acinetobacter guillouiae (Acinetobacter genomosp. 11).